A 264-amino-acid polypeptide reads, in one-letter code: Tryptophan synthase alpha chain (264 aa).

Residues E49 and D60 each act as proton acceptor in the active site.

It belongs to the TrpA family. In terms of assembly, tetramer of two alpha and two beta chains.

The catalysed reaction is (1S,2R)-1-C-(indol-3-yl)glycerol 3-phosphate + L-serine = D-glyceraldehyde 3-phosphate + L-tryptophan + H2O. The protein operates within amino-acid biosynthesis; L-tryptophan biosynthesis; L-tryptophan from chorismate: step 5/5. In terms of biological role, the alpha subunit is responsible for the aldol cleavage of indoleglycerol phosphate to indole and glyceraldehyde 3-phosphate. The polypeptide is Tryptophan synthase alpha chain (Geobacter sulfurreducens (strain ATCC 51573 / DSM 12127 / PCA)).